A 297-amino-acid chain; its full sequence is Phosphatidylserine decarboxylase proenzyme (297 aa).

Catalysis depends on charge relay system; for autoendoproteolytic cleavage activity residues Asp92, His149, and Ser254. Ser254 serves as the catalytic Schiff-base intermediate with substrate; via pyruvic acid; for decarboxylase activity. Ser254 bears the Pyruvic acid (Ser); by autocatalysis mark.

It belongs to the phosphatidylserine decarboxylase family. PSD-B subfamily. Prokaryotic type I sub-subfamily. As to quaternary structure, heterodimer of a large membrane-associated beta subunit and a small pyruvoyl-containing alpha subunit. Requires pyruvate as cofactor. Post-translationally, is synthesized initially as an inactive proenzyme. Formation of the active enzyme involves a self-maturation process in which the active site pyruvoyl group is generated from an internal serine residue via an autocatalytic post-translational modification. Two non-identical subunits are generated from the proenzyme in this reaction, and the pyruvate is formed at the N-terminus of the alpha chain, which is derived from the carboxyl end of the proenzyme. The autoendoproteolytic cleavage occurs by a canonical serine protease mechanism, in which the side chain hydroxyl group of the serine supplies its oxygen atom to form the C-terminus of the beta chain, while the remainder of the serine residue undergoes an oxidative deamination to produce ammonia and the pyruvoyl prosthetic group on the alpha chain. During this reaction, the Ser that is part of the protease active site of the proenzyme becomes the pyruvoyl prosthetic group, which constitutes an essential element of the active site of the mature decarboxylase.

It is found in the cell membrane. It catalyses the reaction a 1,2-diacyl-sn-glycero-3-phospho-L-serine + H(+) = a 1,2-diacyl-sn-glycero-3-phosphoethanolamine + CO2. It participates in phospholipid metabolism; phosphatidylethanolamine biosynthesis; phosphatidylethanolamine from CDP-diacylglycerol: step 2/2. Catalyzes the formation of phosphatidylethanolamine (PtdEtn) from phosphatidylserine (PtdSer). This chain is Phosphatidylserine decarboxylase proenzyme, found in Bordetella parapertussis (strain 12822 / ATCC BAA-587 / NCTC 13253).